A 421-amino-acid polypeptide reads, in one-letter code: MDKIVIKGGNRLTGEVKVEGAKNAVLPVLTASLLASEGQSKLVNVPDLSDVVTINNVLSTLNANVEYNKEEGAVLVDASTTLKEEAPYEYVSKMRASILVMGPLLARLGHAIVALPGGCAIGARPIEQHIKGFEALGAEIHLENGNIYASTKDGLKGTDIHLDFPSVGATQNIIMAASLAKGKTVIENVAKEPEIVDLANYINEMGGKVTGAGTDTITIHGVEKLRGVEHSIIPDRIEAGTLIIAAAITRGDVFVRDAVKEHMTSLIYKLEEMGVNLDFQEDGVRVTAEDELKPVDVKTLPHPGFPTDMQSQMIALLLTAEGHKVITETVFENRFMHVAEFRRMNANITVEGRSAKIQGKSQLQGAQVKATDLRAAAALILAGLVAEGTTQVTELKHLDRGYVNFHEKLKSLGANIERVNY.

22–23 contributes to the phosphoenolpyruvate binding site; that stretch reads KN. Arginine 95 contributes to the UDP-N-acetyl-alpha-D-glucosamine binding site. The active-site Proton donor is the cysteine 119. Cysteine 119 bears the 2-(S-cysteinyl)pyruvic acid O-phosphothioketal mark. UDP-N-acetyl-alpha-D-glucosamine-binding positions include 124–128, aspartate 308, and valine 330; that span reads RPIEQ.

Belongs to the EPSP synthase family. MurA subfamily.

It is found in the cytoplasm. The enzyme catalyses phosphoenolpyruvate + UDP-N-acetyl-alpha-D-glucosamine = UDP-N-acetyl-3-O-(1-carboxyvinyl)-alpha-D-glucosamine + phosphate. Its pathway is cell wall biogenesis; peptidoglycan biosynthesis. Cell wall formation. Adds enolpyruvyl to UDP-N-acetylglucosamine. This chain is UDP-N-acetylglucosamine 1-carboxyvinyltransferase 2, found in Staphylococcus haemolyticus (strain JCSC1435).